The chain runs to 196 residues: tRNA(Phe) 7-((3-amino-3-carboxypropyl)-4-demethylwyosine(37)-N(4))-methyltransferase (196 aa).

This sequence belongs to the TYW3 family.

The catalysed reaction is 4-demethyl-7-[(3S)-3-amino-3-carboxypropyl]wyosine(37) in tRNA(Phe) + S-adenosyl-L-methionine = 7-[(3S)-3-amino-3-carboxypropyl]wyosine(37) in tRNA(Phe) + S-adenosyl-L-homocysteine + H(+). In terms of biological role, S-adenosyl-L-methionine-dependent methyltransferase that acts as a component of the wyosine derivatives biosynthesis pathway. Probably methylates N-4 position of wybutosine-86 to produce wybutosine-72. The chain is tRNA(Phe) 7-((3-amino-3-carboxypropyl)-4-demethylwyosine(37)-N(4))-methyltransferase from Archaeoglobus fulgidus (strain ATCC 49558 / DSM 4304 / JCM 9628 / NBRC 100126 / VC-16).